Reading from the N-terminus, the 323-residue chain is Ferrochelatase (323 aa).

Residues His196 and Glu277 each contribute to the Fe cation site.

Belongs to the ferrochelatase family.

The protein resides in the cytoplasm. It carries out the reaction heme b + 2 H(+) = protoporphyrin IX + Fe(2+). Its pathway is porphyrin-containing compound metabolism; protoheme biosynthesis; protoheme from protoporphyrin-IX: step 1/1. Catalyzes the ferrous insertion into protoporphyrin IX. This Haemophilus influenzae (strain ATCC 51907 / DSM 11121 / KW20 / Rd) protein is Ferrochelatase.